Consider the following 1574-residue polypeptide: Synaptojanin-1 (1574 aa).

An SAC domain is found at 119 to 442 (VRKVLNSGNF…GDSISKIYAG (324 aa)). Positions 500–899 (GSLRVSEQTL…GPPDGTVLVS (400 aa)) are catalytic. Phosphoserine occurs at positions 820 and 830. Positions 894-971 (GTVLVSIKSS…RTITITLKSP (78 aa)) constitute an RRM domain. Over residues 1029-1054 (HLQPSSSSGLGTSPSSSPRTSPCQSP) the composition is skewed to low complexity. Residues 1029–1327 (HLQPSSSSGL…GVKQEPTLKS (299 aa)) form a disordered region. Phosphoserine is present on serine 1053. Residues 1090–1100 (PAAQKESSQTI) are compositionally biased toward polar residues. Residues 1105–1127 (PPPPRPVAPPARPAPPQRPPPPS) are compositionally biased toward pro residues. A phosphoserine mark is found at serine 1147 and serine 1175. At arginine 1198 the chain carries Omega-N-methylarginine. Threonine 1217 bears the Phosphothreonine mark. Residues 1287–1310 (SRSSQSLPSDSSPQLQQEQPTGQQ) are compositionally biased toward low complexity. Phosphoserine is present on residues serine 1289 and serine 1350. Threonine 1354 is modified (phosphothreonine). 2 disordered regions span residues 1382 to 1519 (TMPP…SFDD) and 1532 to 1574 (LPAR…FTER). Residues 1389–1413 (QSKSQESVGSSANPFPSLPTRNPFT) are compositionally biased toward polar residues. 3 consecutive repeat copies span residues 1401 to 1403 (NPF), 1410 to 1412 (NPF), and 1421 to 1423 (NPF). The interval 1401–1423 (NPFPSLPTRNPFTDRTAAPGNPF) is 3 X 3 AA repeats of N-P-F. 2 stretches are compositionally biased toward polar residues: residues 1424 to 1436 (RVQS…TSWL) and 1472 to 1484 (DLQS…TSNP). Residues 1535-1548 (RRPPPPPPPVPLLP) show a composition bias toward pro residues. Residues 1549–1563 (PGTTSSAGPSTTLSS) are compositionally biased toward low complexity. Phosphoserine is present on serine 1566.

It belongs to the synaptojanin family. This sequence in the central section; belongs to the inositol 1,4,5-trisphosphate 5-phosphatase family. In terms of assembly, interacts with ASH/GRB2. Interacts with PACSIN1, PACSIN2 and PACSIN3. Interacts with AMPH, SH3GL1, SH3GL2 and SH3GL3. Interacts with MYO1E (via SH3 domain). Interacts with BIN1 and DNM1. Interacts with EPS15. Found in neonatal brain, and in a wide variety of adult non-neuronal tissues. Concentrated at clathrin-coated endocytic intermediates in nerve terminals. Also detected in the lung and heart. Expressed at higher levels than isoform 2 in the testis and liver and is not detected in the skeletal muscle. In terms of tissue distribution, expressed predominantly in the neurons, but is also found in all other tissues at much lower levels. Also detected in the lung and heart. Epressed at lower levels than isoform 1 in the testis and liver and is not detected in the skeletal muscle. As to expression, expressed in the brain.

It is found in the membrane. The protein localises to the cytoplasm. It localises to the perinuclear region. It catalyses the reaction a 1,2-diacyl-sn-glycero-3-phospho-(1D-myo-inositol-4,5-bisphosphate) + H2O = a 1,2-diacyl-sn-glycero-3-phospho-(1D-myo-inositol 4-phosphate) + phosphate. Functionally, phosphatase that acts on various phosphoinositides, including phosphatidylinositol 4-phosphate, phosphatidylinositol (4,5)-bisphosphate and phosphatidylinositol (3,4,5)-trisphosphate. Has a role in clathrin-mediated endocytosis. Hydrolyzes PIP2 bound to actin regulatory proteins resulting in the rearrangement of actin filaments downstream of tyrosine kinase and ASH/GRB2. The sequence is that of Synaptojanin-1 (Synj1) from Rattus norvegicus (Rat).